Consider the following 457-residue polypeptide: NADP-specific glutamate dehydrogenase (457 aa).

The active site involves K113.

This sequence belongs to the Glu/Leu/Phe/Val dehydrogenases family. Homohexamer.

It carries out the reaction L-glutamate + NADP(+) + H2O = 2-oxoglutarate + NH4(+) + NADPH + H(+). In Tuber borchii (White truffle), this protein is NADP-specific glutamate dehydrogenase (GDH).